An 852-amino-acid chain; its full sequence is Protein SBE22 (852 aa).

Residues 1–158 are disordered; sequence MTSIQERGTS…ADKSKINTFP (158 aa). Over residues 15-26 the composition is skewed to basic and acidic residues; sequence SLKEGEASDRSS. Polar residues predominate over residues 43-61; the sequence is PPSQTTLGRSRAGSNTMNK. A Phosphoserine modification is found at Ser72. The span at 74-96 shows a compositional bias: polar residues; the sequence is NLLSNMNCSDNGNGGNMLNSFVN. A compositionally biased stretch (low complexity) spans 124 to 139; the sequence is TTEVFSSTSASSSLGD. Ser201 carries the phosphoserine modification. The segment at 206-248 is disordered; it reads AAEKTMNKSRHSYQEQFSSKKSQSSLLNSKQRSRAKSQTCSST. Residues 224 to 235 show a composition bias toward low complexity; sequence SKKSQSSLLNSK. A phosphoserine mark is found at Ser459, Ser517, and Ser520.

This sequence belongs to the SBE2 family.

It localises to the cytoplasm. Its subcellular location is the golgi apparatus. Functionally, with SBE2, is involved in cell wall integrity and polarity processes like bud growth, through the transport of CHS3 and UTR2 to sites of growth. This is Protein SBE22 (SBE22) from Saccharomyces cerevisiae (strain YJM789) (Baker's yeast).